The following is a 233-amino-acid chain: uncharacterized protein (233 aa).

A disordered region spans residues 21-43 (RWRTATSADHPRRGRPAAQAVRR).

This is an uncharacterized protein from Mycobacterium tuberculosis (strain CDC 1551 / Oshkosh).